The chain runs to 342 residues: Anthranilate phosphoribosyltransferase (342 aa).

5-phospho-alpha-D-ribose 1-diphosphate-binding positions include G90, 93–94, T98, 100–103, 118–126, and S130; these read GS, NIST, and KHGNRRATS. G90 contributes to the anthranilate binding site. S102 provides a ligand contact to Mg(2+). Position 121 (N121) interacts with anthranilate. R176 contacts anthranilate. D235 and E236 together coordinate Mg(2+).

Belongs to the anthranilate phosphoribosyltransferase family. Homodimer. The cofactor is Mg(2+).

The enzyme catalyses N-(5-phospho-beta-D-ribosyl)anthranilate + diphosphate = 5-phospho-alpha-D-ribose 1-diphosphate + anthranilate. It functions in the pathway amino-acid biosynthesis; L-tryptophan biosynthesis; L-tryptophan from chorismate: step 2/5. Its function is as follows. Catalyzes the transfer of the phosphoribosyl group of 5-phosphorylribose-1-pyrophosphate (PRPP) to anthranilate to yield N-(5'-phosphoribosyl)-anthranilate (PRA). The sequence is that of Anthranilate phosphoribosyltransferase from Rhodopirellula baltica (strain DSM 10527 / NCIMB 13988 / SH1).